The following is a 133-amino-acid chain: Interferon alpha-inducible protein 27-like protein 2 (133 aa).

A run of 3 helical transmembrane segments spans residues 8–28, 51–71, and 73–93; these read AAIGGALAVAAVPAVLGAVGF, GGGVAAGSLVATLQSVGAAGL, and TSSNILLGSIGSAFGALLGGA. The interval 93 to 133 is disordered; that stretch reads AKRASPSPPPGGPRPEGEQPGENVPQVEPPKSPLGPEKHEK.

Belongs to the IFI6/IFI27 family.

It is found in the mitochondrion membrane. Functionally, plays a role in the apoptotic process and has a pro-apoptotic activity. The sequence is that of Interferon alpha-inducible protein 27-like protein 2 from Bos taurus (Bovine).